Here is a 167-residue protein sequence, read N- to C-terminus: Translationally-controlled tumor protein homolog (167 aa).

Residues 1 to 167 form the TCTP domain; it reads MLIFEDVISG…WKHGVKENKI (167 aa).

Belongs to the TCTP family.

It is found in the cytoplasm. The protein localises to the cytoskeleton. Its function is as follows. Involved in protein synthesis. Involved in microtubule stabilization. The protein is Translationally-controlled tumor protein homolog (TMA19) of Candida albicans (strain SC5314 / ATCC MYA-2876) (Yeast).